The primary structure comprises 295 residues: Ribosomal protein L11 methyltransferase (295 aa).

Residues Thr146, Gly167, Asp189, and Asn231 each coordinate S-adenosyl-L-methionine.

This sequence belongs to the methyltransferase superfamily. PrmA family.

It localises to the cytoplasm. The enzyme catalyses L-lysyl-[protein] + 3 S-adenosyl-L-methionine = N(6),N(6),N(6)-trimethyl-L-lysyl-[protein] + 3 S-adenosyl-L-homocysteine + 3 H(+). Methylates ribosomal protein L11. This chain is Ribosomal protein L11 methyltransferase, found in Vibrio campbellii (strain ATCC BAA-1116).